The sequence spans 327 residues: Tagatose 1,6-diphosphate aldolase 2 (327 aa).

This sequence belongs to the aldolase LacD family.

The enzyme catalyses D-tagatofuranose 1,6-bisphosphate = D-glyceraldehyde 3-phosphate + dihydroxyacetone phosphate. It participates in carbohydrate metabolism; D-tagatose 6-phosphate degradation; D-glyceraldehyde 3-phosphate and glycerone phosphate from D-tagatose 6-phosphate: step 2/2. The chain is Tagatose 1,6-diphosphate aldolase 2 (lacD2) from Streptococcus pyogenes serotype M1.